A 474-amino-acid polypeptide reads, in one-letter code: Trehalose-6-phosphate synthase (474 aa).

Residue Arg10 participates in D-glucose 6-phosphate binding. Residue 22 to 23 (GG) coordinates UDP-alpha-D-glucose. Positions 77 and 131 each coordinate D-glucose 6-phosphate. Residues Arg263 and Lys268 each coordinate UDP-alpha-D-glucose. D-glucose 6-phosphate is bound at residue Arg301. UDP-alpha-D-glucose-binding positions include Phe340 and 366–370 (LVAKE).

Belongs to the glycosyltransferase 20 family. In terms of assembly, homotetramer.

The enzyme catalyses D-glucose 6-phosphate + UDP-alpha-D-glucose = alpha,alpha-trehalose 6-phosphate + UDP + H(+). It participates in glycan biosynthesis; trehalose biosynthesis. Functionally, probably involved in the osmoprotection via the biosynthesis of trehalose. Catalyzes the transfer of glucose from UDP-alpha-D-glucose (UDP-Glc) to D-glucose 6-phosphate (Glc-6-P) to form trehalose-6-phosphate. Acts with retention of the anomeric configuration of the UDP-sugar donor. The polypeptide is Trehalose-6-phosphate synthase (Escherichia coli O9:H4 (strain HS)).